Reading from the N-terminus, the 67-residue chain is Protein C' (67 aa).

The protein belongs to the rhabdoviruses C protein family.

Functionally, seems to stimulates transcription by the viral polymerase. May play a role in viral pathogenesis or transmission by insects vectors. This is Protein C' (P) from Aedes (Bovine).